The following is a 111-amino-acid chain: Large ribosomal subunit protein uL23 (111 aa).

This sequence belongs to the universal ribosomal protein uL23 family. In terms of assembly, part of the 50S ribosomal subunit. Contacts protein L29, and trigger factor when it is bound to the ribosome.

Its function is as follows. One of the early assembly proteins it binds 23S rRNA. One of the proteins that surrounds the polypeptide exit tunnel on the outside of the ribosome. Forms the main docking site for trigger factor binding to the ribosome. The chain is Large ribosomal subunit protein uL23 from Chlamydia felis (strain Fe/C-56) (Chlamydophila felis).